The primary structure comprises 103 residues: Large ribosomal subunit protein uL24 (103 aa).

The protein belongs to the universal ribosomal protein uL24 family. As to quaternary structure, part of the 50S ribosomal subunit.

In terms of biological role, one of two assembly initiator proteins, it binds directly to the 5'-end of the 23S rRNA, where it nucleates assembly of the 50S subunit. One of the proteins that surrounds the polypeptide exit tunnel on the outside of the subunit. This chain is Large ribosomal subunit protein uL24, found in Latilactobacillus sakei subsp. sakei (strain 23K) (Lactobacillus sakei subsp. sakei).